Reading from the N-terminus, the 206-residue chain is Large ribosomal subunit protein mL62 (206 aa).

A mitochondrion-targeting transit peptide spans 1-29 (MAAARCLRWGLSRAEAWLLPPPTSCCHRA). Gln90 carries the N5-methylglutamine modification.

This sequence belongs to the prokaryotic/mitochondrial release factor family. Mitochondrion-specific ribosomal protein mL62 subfamily. Component of the mitochondrial ribosome large subunit (39S) which comprises a 16S rRNA and about 50 distinct proteins. Methylation of glutamine in the GGQ triplet by HEMK1.

The protein localises to the mitochondrion. The catalysed reaction is an N-acyl-L-alpha-aminoacyl-tRNA + H2O = an N-acyl-L-amino acid + a tRNA + H(+). Its function is as follows. Essential peptidyl-tRNA hydrolase component of the mitochondrial large ribosomal subunit. Acts as a codon-independent translation release factor that has lost all stop codon specificity and directs the termination of translation in mitochondrion, possibly in case of abortive elongation. May be involved in the hydrolysis of peptidyl-tRNAs that have been prematurely terminated and thus in the recycling of stalled mitochondrial ribosomes. The chain is Large ribosomal subunit protein mL62 from Bos taurus (Bovine).